The chain runs to 421 residues: MYKKLYLIGILLLGLISGLTFNLIFFTVPYQLSEAKYTTDIIGAISLAAFPYCLKVIWSPFIDKYSIPFLGVKLGHRRSWALVSQIFLILAMMWFLKRSPCNNLCITAIILFIIAFFSSTQDIVLDAYRIERTTSKEELSIVFTFSSIGFRLGMLLGSVGSLYSSIIFGWNTVYKFALFITMVGPIVILCIKEPKLKTKRHTTNTLIDLQQYFEVIKKSIISFKNEQQYLLLIILFVFLYKAADSIPMAMSIPLFLDLSFTTHEIAVIYKAYGLLIMIVGGTLGGILAAKIGIFHSVLIGGVIQLLSPLMFMILATIGYDIKTFIITITIQNFCSGFAGTIISIYFASLCNSEFVATQYAISASFSSLSRIILASLGGICAKHLTWSVFFLCNTLFSMLFIPIFYTIYRKKLHFMNHSKKI.

The next 12 helical transmembrane spans lie at 6–26 (YLIGILLLGLISGLTFNLIFF), 41–61 (IIGAISLAAFPYCLKVIWSPF), 80–100 (WALVSQIFLILAMMWFLKRSP), 104–124 (LCITAIILFIIAFFSSTQDIV), 139–159 (LSIVFTFSSIGFRLGMLLGSV), 166–186 (IIFGWNTVYKFALFITMVGPI), 230–250 (LLLIILFVFLYKAADSIPMAM), 274–294 (LLIMIVGGTLGGILAAKIGIF), 297–317 (VLIGGVIQLLSPLMFMILATI), 324–344 (FIITITIQNFCSGFAGTIISI), 360–380 (AISASFSSLSRIILASLGGIC), and 388–408 (VFFLCNTLFSMLFIPIFYTIY).

Belongs to the major facilitator superfamily.

It is found in the cell inner membrane. The protein is Putative transporter AmpG 3 (ampG3) of Rickettsia prowazekii (strain Madrid E).